Here is an 870-residue protein sequence, read N- to C-terminus: Patatin-like phospholipase domain-containing protein NCU11180 (870 aa).

Disordered stretches follow at residues M1–A24 and K131–A158. Positions K131–R141 are enriched in basic and acidic residues. Residues N142–K155 show a composition bias toward basic residues. Residues W183–T203 form a helical membrane-spanning segment. The segment at E281–T320 is disordered. A compositionally biased stretch (polar residues) spans S289–K308. Positions L399–N590 constitute a PNPLA domain. The GXSXG motif lies at G430 to G434. Residue S432 is the Nucleophile of the active site. D577 acts as the Proton acceptor in catalysis. Disordered regions lie at residues R735–G786 and G804–T870. A compositionally biased stretch (acidic residues) spans T818–G834.

The protein belongs to the PLPL family.

It localises to the membrane. In terms of biological role, probable lipid hydrolase. The protein is Patatin-like phospholipase domain-containing protein NCU11180 of Neurospora crassa (strain ATCC 24698 / 74-OR23-1A / CBS 708.71 / DSM 1257 / FGSC 987).